The primary structure comprises 308 residues: Olfactory receptor 2T7 (308 aa).

Topologically, residues 1 to 17 (MPTLSFWVCSATPVSPG) are extracellular. The helical transmembrane segment at 18-40 (FFALILLVFVTSIASNVVKIILI) threads the bilayer. Residues 41–51 (HIDSRLHTPMY) are Cytoplasmic-facing. Residues 52 to 74 (FLLSQLSLRDILYISTIVPKMLV) form a helical membrane-spanning segment. Residues 75–88 (DQVMSQRAISFAGC) are Extracellular-facing. A disulfide bridge connects residues Cys-88 and Cys-170. Residues 89-109 (TAQHFLYLTLAGAEFFLLGLM) traverse the membrane as a helical segment. The Cytoplasmic portion of the chain corresponds to 110-130 (SCDRYVAICNPLHYPDLMSRK). A helical membrane pass occupies residues 131–151 (ICWLIVAAAWLGGSIDGFLLT). At 152–188 (PVTMQFPFCASREINHFFCEVPALLKLSCTDTSAYET) the chain is on the extracellular side. The chain crosses the membrane as a helical span at residues 189-209 (AMYVCCIMMLLIPFSVISGSY). Residues 210-235 (TRILITVYRMSEAEGRRKAVATCSSH) are Cytoplasmic-facing. A helical transmembrane segment spans residues 236-256 (MVVVSLFYGAAMYTYVLPHSY). At 257–262 (HTPEQD) the chain is on the extracellular side. A helical transmembrane segment spans residues 263–283 (KAVSAFYTILTPMLNPLIYSL). At 284 to 308 (RNKDVTGALQKVVGRCVSSGKVTTF) the chain is on the cytoplasmic side.

It belongs to the G-protein coupled receptor 1 family.

The protein localises to the cell membrane. In terms of biological role, odorant receptor. The chain is Olfactory receptor 2T7 (OR2T7) from Homo sapiens (Human).